Reading from the N-terminus, the 308-residue chain is Isoflavone reductase homolog (308 aa).

NADP(+) is bound by residues 11–17, arginine 36, and lysine 45; that span reads GGTGYIG. The active-site Proton acceptor is lysine 133. Arginine 137 is a binding site for NADP(+).

This sequence belongs to the NmrA-type oxidoreductase family. Isoflavone reductase subfamily.

The protein resides in the cytoplasm. The chain is Isoflavone reductase homolog from Solanum tuberosum (Potato).